We begin with the raw amino-acid sequence, 393 residues long: 1-deoxy-D-xylulose 5-phosphate reductoisomerase (393 aa).

NADPH is bound by residues Thr-13, Gly-14, Ser-15, Ile-16, and Asn-128. Lys-129 contacts 1-deoxy-D-xylulose 5-phosphate. Residue Glu-130 coordinates NADPH. Residue Asp-154 participates in Mn(2+) binding. 4 residues coordinate 1-deoxy-D-xylulose 5-phosphate: Ser-155, Glu-156, Ser-178, and His-201. Glu-156 serves as a coordination point for Mn(2+). Residue Gly-207 coordinates NADPH. 1-deoxy-D-xylulose 5-phosphate is bound by residues Ser-214, Asn-219, Lys-220, and Glu-223. Mn(2+) is bound at residue Glu-223.

Belongs to the DXR family. It depends on Mg(2+) as a cofactor. The cofactor is Mn(2+).

It catalyses the reaction 2-C-methyl-D-erythritol 4-phosphate + NADP(+) = 1-deoxy-D-xylulose 5-phosphate + NADPH + H(+). Its pathway is isoprenoid biosynthesis; isopentenyl diphosphate biosynthesis via DXP pathway; isopentenyl diphosphate from 1-deoxy-D-xylulose 5-phosphate: step 1/6. Its function is as follows. Catalyzes the NADPH-dependent rearrangement and reduction of 1-deoxy-D-xylulose-5-phosphate (DXP) to 2-C-methyl-D-erythritol 4-phosphate (MEP). This is 1-deoxy-D-xylulose 5-phosphate reductoisomerase from Acidithiobacillus ferrooxidans (strain ATCC 23270 / DSM 14882 / CIP 104768 / NCIMB 8455) (Ferrobacillus ferrooxidans (strain ATCC 23270)).